Reading from the N-terminus, the 301-residue chain is Acetylglutamate kinase (301 aa).

Residues G68 to G69, R90, and N195 contribute to the substrate site.

This sequence belongs to the acetylglutamate kinase family. ArgB subfamily.

It is found in the cytoplasm. The enzyme catalyses N-acetyl-L-glutamate + ATP = N-acetyl-L-glutamyl 5-phosphate + ADP. The protein operates within amino-acid biosynthesis; L-arginine biosynthesis; N(2)-acetyl-L-ornithine from L-glutamate: step 2/4. Catalyzes the ATP-dependent phosphorylation of N-acetyl-L-glutamate. The protein is Acetylglutamate kinase of Pseudomonas paraeruginosa (strain DSM 24068 / PA7) (Pseudomonas aeruginosa (strain PA7)).